Reading from the N-terminus, the 185-residue chain is Ribosome-recycling factor (185 aa).

It belongs to the RRF family.

It is found in the cytoplasm. Its function is as follows. Responsible for the release of ribosomes from messenger RNA at the termination of protein biosynthesis. May increase the efficiency of translation by recycling ribosomes from one round of translation to another. The polypeptide is Ribosome-recycling factor (Thermosipho melanesiensis (strain DSM 12029 / CIP 104789 / BI429)).